A 374-amino-acid chain; its full sequence is Chaperone protein DnaJ (374 aa).

The J domain occupies 4-69 (SYYEILEITQ…EKRAIYDRYG (66 aa)). The CR-type zinc-finger motif lies at 136 to 213 (GCKKNIDFTY…CKGLGYNESK (78 aa)). Positions 149, 152, 165, 168, 187, 190, 201, and 204 each coordinate Zn(2+). CXXCXGXG motif repeat units follow at residues 149–156 (CKTCNGTG), 165–172 (CPKCQGRG), 187–194 (CPDCQGSG), and 201–208 (CNDCKGLG).

This sequence belongs to the DnaJ family. Homodimer. Requires Zn(2+) as cofactor.

It is found in the cytoplasm. Functionally, participates actively in the response to hyperosmotic and heat shock by preventing the aggregation of stress-denatured proteins and by disaggregating proteins, also in an autonomous, DnaK-independent fashion. Unfolded proteins bind initially to DnaJ; upon interaction with the DnaJ-bound protein, DnaK hydrolyzes its bound ATP, resulting in the formation of a stable complex. GrpE releases ADP from DnaK; ATP binding to DnaK triggers the release of the substrate protein, thus completing the reaction cycle. Several rounds of ATP-dependent interactions between DnaJ, DnaK and GrpE are required for fully efficient folding. Also involved, together with DnaK and GrpE, in the DNA replication of plasmids through activation of initiation proteins. In Campylobacter jejuni subsp. doylei (strain ATCC BAA-1458 / RM4099 / 269.97), this protein is Chaperone protein DnaJ.